The chain runs to 193 residues: Potassium-transporting ATPase KdpC subunit (193 aa).

The helical transmembrane segment at Ile14 to Ala34 threads the bilayer.

Belongs to the KdpC family. As to quaternary structure, the system is composed of three essential subunits: KdpA, KdpB and KdpC.

Its subcellular location is the cell membrane. Its function is as follows. Part of the high-affinity ATP-driven potassium transport (or Kdp) system, which catalyzes the hydrolysis of ATP coupled with the electrogenic transport of potassium into the cytoplasm. This subunit acts as a catalytic chaperone that increases the ATP-binding affinity of the ATP-hydrolyzing subunit KdpB by the formation of a transient KdpB/KdpC/ATP ternary complex. The chain is Potassium-transporting ATPase KdpC subunit from Bacillus cereus (strain Q1).